The sequence spans 303 residues: MTEFIFLVLSPNQEVQRVCFVIFLFLYTAIVLGNFLIVLTVMTSRSLGSPMYFFLSYLSFMEICYSSATAPKLISDLLAERKVISWWGCMAQLFFLHFFGGTEIFLLTVMAYDHYVAICKPLSYTTIMNWQVCTVLVGIAWVGGFMHSFAQILLIFHLLFCGPNVINHYFCDLVPLLKLACSDTFLIGLLIVANGGTLSVISFGVLLASYMVILLHLRTWSSEGWCKALSTCGSHFAVVILFFGPCVFNSLRPSTTLPIDKMVAVFYTVITAILNPVIYSLRNAEMRKAMKRLWIRTLRLNEK.

Residues 1–17 (MTEFIFLVLSPNQEVQR) lie on the Extracellular side of the membrane. The helical transmembrane segment at 18–41 (VCFVIFLFLYTAIVLGNFLIVLTV) threads the bilayer. Over 42 to 49 (MTSRSLGS) the chain is Cytoplasmic. A helical membrane pass occupies residues 50–71 (PMYFFLSYLSFMEICYSSATAP). The Extracellular segment spans residues 72 to 92 (KLISDLLAERKVISWWGCMAQ). A disulfide bridge connects residues C89 and C181. A helical membrane pass occupies residues 93 to 112 (LFFLHFFGGTEIFLLTVMAY). Residues 113-131 (DHYVAICKPLSYTTIMNWQ) are Cytoplasmic-facing. Residues 132-150 (VCTVLVGIAWVGGFMHSFA) traverse the membrane as a helical segment. Topologically, residues 151-187 (QILLIFHLLFCGPNVINHYFCDLVPLLKLACSDTFLI) are extracellular. Residues 188–211 (GLLIVANGGTLSVISFGVLLASYM) traverse the membrane as a helical segment. Over 212 to 227 (VILLHLRTWSSEGWCK) the chain is Cytoplasmic. A helical membrane pass occupies residues 228 to 250 (ALSTCGSHFAVVILFFGPCVFNS). Residues 251 to 261 (LRPSTTLPIDK) are Extracellular-facing. A helical membrane pass occupies residues 262-281 (MVAVFYTVITAILNPVIYSL). Over 282 to 303 (RNAEMRKAMKRLWIRTLRLNEK) the chain is Cytoplasmic.

It belongs to the G-protein coupled receptor 1 family.

It is found in the cell membrane. In terms of biological role, odorant receptor. The protein is Olfactory receptor 4X2 (OR4X2) of Homo sapiens (Human).